The primary structure comprises 430 residues: Pre-B-cell leukemia transcription factor 2 (430 aa).

A disordered region spans residues 1-52; the sequence is MDERLLGPPPPGGGRGGLGLVGAEPGGPGEPPGGGDPGGGSGGVPGGRGKQD. Residues 13 to 48 show a composition bias toward gly residues; it reads GGRGGLGLVGAEPGGPGEPPGGGDPGGGSGGVPGGR. A PBC domain is found at 48-243; the sequence is RGKQDIGDIL…VMILRSRFLD (196 aa). Positions 55–134 are PBC-A; sequence DILQQIMTIT…EGVAGPEKGG (80 aa). 3 positions are modified to phosphoserine: S136, S151, and S159. Positions 137-243 are PBC-B; sequence AAAAAAAAAS…VMILRSRFLD (107 aa). Residues 244–306 constitute a DNA-binding region (homeobox; TALE-type); it reads ARRKRRNFSK…NKRIRYKKNI (63 aa). 2 disordered regions span residues 327–347 and 375–430; these read GGHS…GGSF and LRHS…DTSN. Phosphoserine is present on residues S330 and S395. Residues 409–418 show a composition bias toward polar residues; the sequence is VTPSSVTSPT.

This sequence belongs to the TALE/PBX homeobox family. In terms of assembly, forms heterodimers with MEIS1 and heterotrimers with MEIS1 and HOXA9. Interacts with PBXIP1.

The protein resides in the nucleus. Functionally, transcriptional activator that binds the sequence 5'-ATCAATCAA-3'. Activates transcription of PF4 in complex with MEIS1. This is Pre-B-cell leukemia transcription factor 2 (Pbx2) from Mus musculus (Mouse).